Here is a 31-residue protein sequence, read N- to C-terminus: Zinc metalloproteinase alsophinase (31 aa).

Pyrrolidone carboxylic acid is present on Q1. The Peptidase M12B domain occupies 9 to 31 (KYIEFYLVVDNGMFXKYSXXFTV). Ca(2+) is bound at residue E12.

In terms of assembly, monomer. It depends on Zn(2+) as a cofactor. In terms of processing, contains 9 disulfide bonds. In terms of tissue distribution, expressed by the venom gland.

It localises to the secreted. With respect to regulation, inhibited by 1,10-phenanthroline. Functionally, snake venom zinc metalloprotease that has potent hemorrhagic activity, fibrinogenolytic activity on the alpha-subunit of human fibrinogen (FGA) in vitro and provokes necrosis in skin, muscle and lung tissues. May contribute to local edema and ecchymosis induced by venom. Hydrolyzes model substrate (beta-chain of insulin) at Ala(14)-Leu(15). The protein is Zinc metalloproteinase alsophinase of Borikenophis portoricensis (Puerto Rican racer).